Consider the following 186-residue polypeptide: Ribosome-recycling factor (186 aa).

The protein belongs to the RRF family.

Its subcellular location is the cytoplasm. In terms of biological role, responsible for the release of ribosomes from messenger RNA at the termination of protein biosynthesis. May increase the efficiency of translation by recycling ribosomes from one round of translation to another. This is Ribosome-recycling factor from Endomicrobium trichonymphae.